A 105-amino-acid polypeptide reads, in one-letter code: Fluoride-specific ion channel FluC (105 aa).

Helical transmembrane passes span 14-34 (FPLP…VFVV), 44-64 (LSPL…AFSL), and 79-99 (ALYV…GLWL). The Na(+) site is built by Gly54 and Thr57.

The protein belongs to the fluoride channel Fluc/FEX (TC 1.A.43) family.

The protein resides in the cell inner membrane. It carries out the reaction fluoride(in) = fluoride(out). Its activity is regulated as follows. Na(+) is not transported, but it plays an essential structural role and its presence is essential for fluoride channel function. Fluoride-specific ion channel. Important for reducing fluoride concentration in the cell, thus reducing its toxicity. This is Fluoride-specific ion channel FluC from Jannaschia sp. (strain CCS1).